The following is a 3011-amino-acid chain: Genome polyprotein (3011 aa).

At S2 the chain carries N-acetylserine; by host. The interaction with STAT1 stretch occupies residues 2 to 23 (STIPKPQRKTKRNTNRRPQDVK). The segment at 2-58 (STIPKPQRKTKRNTNRRPQDVKFPGGGQIVGGVYLLPRRGPRLGVRATRKTSERSQP) is interaction with EIF2AK2/PKR. An interaction with DDX3X region spans residues 2–59 (STIPKPQRKTKRNTNRRPQDVKFPGGGQIVGGVYLLPRRGPRLGVRATRKTSERSQPR). The segment at 2 to 75 (STIPKPQRKT…PKVRRPEGRT (74 aa)) is disordered. Over 2-168 (STIPKPQRKT…EDGVNYATGN (167 aa)) the chain is Cytoplasmic. 2 consecutive short sequence motifs (nuclear localization signal) follow at residues 5–13 (PKPQRKTKR) and 38–43 (PRRGPR). Residues 7–16 (PQRKTKRNTN) show a composition bias toward basic residues. Residues 32-47 (GGVYLLPRRGPRLGVR) are compositionally biased toward low complexity. At S53 the chain carries Phosphoserine; by host. Short sequence motifs (nuclear localization signal) lie at residues 58–64 (PRGRRQP) and 66–71 (PKVRRP). The segment covering 58 to 68 (PRGRRQPIPKV) has biased composition (basic residues). S99 carries the phosphoserine; by host modification. Residues 112–152 (PRRRSRNLGKVIDTLTCGFADLMGYIPLVGAPLGGAARALA) form an important for endoplasmic reticulum and mitochondrial localization region. S116 carries the phosphoserine; by host PKA modification. Positions 122–173 (VIDTLTCGFADLMGYIPLVGAPLGGAARALAHGVRVLEDGVNYATGNLPGCS) are interaction with APOA2. The important for lipid droplets localization stretch occupies residues 164 to 167 (YATG). The helical transmembrane segment at 169-189 (LPGCSFSIFLLALLSCLTVPA) threads the bilayer. The propeptide at 178 to 191 (LLALLSCLTVPASA) is ER anchor for the core protein, removed in mature form by host signal peptidase. Topologically, residues 190–358 (SAYQVRNSTG…AGAHWGVLAG (169 aa)) are lumenal. N-linked (GlcNAc...) asparagine; by host glycans are attached at residues N196, N209, and N234. The important for fusion stretch occupies residues 265–296 (LVGSATLCSALYVGDLCGSVFLIGQLFTFSPR). A glycan (N-linked (GlcNAc...) asparagine; by host) is linked at N305. Residues 359–379 (IAYFSMVGNWAKVLVVLLLFA) traverse the membrane as a helical segment. The Lumenal portion of the chain corresponds to 380 to 725 (GVDAETIVSG…WEYVVLLFLL (346 aa)). The segment at 385-411 (TIVSGGQAARAMSGLVSLFTPGAKQNI) is HVR1. N-linked (GlcNAc...) (high mannose) asparagine; by host glycans are attached at residues N417, N423, N430, and N448. Intrachain disulfides connect C429–C552, C452–C459, C486–C494, and C503–C508. Positions 474 to 479 (HANGSG) are HVR2. The tract at residues 480–493 (PDQRPYCWHYPPKP) is CD81-binding 1. N532 carries N-linked (GlcNAc...) (high mannose) asparagine; by host glycosylation. N540 is a glycosylation site (N-linked (GlcNAc...) asparagine; by host). The tract at residues 544–551 (PPLGNWFG) is CD81-binding 2. The N-linked (GlcNAc...) (high mannose) asparagine; by host glycan is linked to N556. Residues C564 and C569 are joined by a disulfide bond. N-linked (GlcNAc...) (high mannose) asparagine; by host glycosylation is present at N576. 3 disulfide bridges follow: C581–C585, C597–C620, and C607–C644. N-linked (GlcNAc...) (high mannose) asparagine; by host glycans are attached at residues N623 and N645. An intrachain disulfide couples C652 to C677. Residues 660–671 (SELSPLLLSTTQ) form a PKR/eIF2-alpha phosphorylation homology domain (PePHD) region. The helical transmembrane segment at 726–746 (LADARVCSCLWMMLLISQAEA) threads the bilayer. Over 747 to 757 (ALENLVILNAA) the chain is Lumenal. A helical transmembrane segment spans residues 758-778 (SLAGTRGLVSFLVFFCFAWYL). Residues 779–781 (KGR) lie on the Cytoplasmic side of the membrane. A helical transmembrane segment spans residues 782 to 803 (WVPGAAYALYGMWPLLLLLLAL). The Lumenal portion of the chain corresponds to 804–813 (PQRAYALDTE). A helical membrane pass occupies residues 814-834 (VAASCGGVVLVGLMALTLSPY). Over 835 to 838 (YKRC) the chain is Cytoplasmic. The helical transmembrane segment at 839–859 (ISWCLWWLQYFLTRVEAQLHV) threads the bilayer. At 860–881 (WVPPLNVRGGRDAVILLMCVVH) the chain is on the lumenal side. The helical transmembrane segment at 882–902 (PTLVFDITKLLLAVLGPLWIL) threads the bilayer. The region spanning 903 to 1026 (QASLLKVPYF…GMVSKGWRLL (124 aa)) is the Peptidase C18 domain. The Cytoplasmic portion of the chain corresponds to 903–1657 (QASLLKVPYF…CMSADLEVVT (755 aa)). Positions 904–1206 (ASLLKVPYFV…PVESLETTMR (303 aa)) are protease NS2-3. C922 carries the S-palmitoyl cysteine; by host lipid modification. Residues 929–949 (VGGHYVQMAIIKLGALTGTYV) are interaction with host SCPS1. Catalysis depends on for protease NS2 activity; shared with dimeric partner residues H952, E972, and C993. Residues 1027 to 1208 (APITAYAQQT…ESLETTMRSP (182 aa)) form the Peptidase S29 domain. Residues H1083 and D1107 each act as charge relay system; for serine protease NS3 activity in the active site. 2 residues coordinate Zn(2+): C1123 and C1125. S1165 (charge relay system; for serine protease NS3 activity) is an active-site residue. C1171 and H1175 together coordinate Zn(2+). The region spanning 1217 to 1369 (PAVPQSFQVA…ANIEEVALST (153 aa)) is the Helicase ATP-binding domain. 1230-1237 (APTGSGKS) contributes to the ATP binding site. The Mg(2+) site is built by S1237 and E1317. The DECH box signature appears at 1316-1319 (DECH). Positions 1486–1497 (QRRGRTGRGKPG) are RNA-binding. The helical transmembrane segment at 1658-1678 (STWVLVGGVLAALAAYCLSTG) threads the bilayer. The tract at residues 1679–1690 (CVVIVGRIVLSG) is NS3-binding. Over 1679–1805 (CVVIVGRIVL…AVTSPLTTSQ (127 aa)) the chain is Cytoplasmic. A helical membrane pass occupies residues 1806 to 1824 (TLLFNILGGWVAAQLAAPG). Over 1825 to 1828 (AATA) the chain is Lumenal. Residues 1829 to 1849 (FVGSGLAGAAVGSVGLGRVLV) traverse the membrane as a helical segment. Position 1850 (D1850) is a topological domain, cytoplasmic. Residues 1851–1871 (ILAGYGAGVAGALVAFKIMSG) form a helical membrane-spanning segment. At 1872-1881 (ELPSTEDLVN) the chain is on the lumenal side. A helical transmembrane segment spans residues 1882-1902 (LLPAILSPGALVVGVVCAAIL). The Cytoplasmic segment spans residues 1903-1972 (RRHVGPGEGA…WLSSESTTPC (70 aa)). A lipid anchor (S-palmitoyl cysteine; by host) is attached at C1972. The stretch at 1973–2002 (SGSWLRDIWDWICEVLSDFKTWLKTKLMPH) is an intramembrane region. Topologically, residues 2003–2990 (LPGIPFVSCQ…YHSVSHARPR (988 aa)) are cytoplasmic. Zn(2+) is bound by residues C2011, C2029, C2031, and C2052. The segment at 2120–2208 (EFFTELDGVR…ASSSASQLSA (89 aa)) is FKBP8-binding. Positions 2120 to 2332 (EFFTELDGVR…PVPPPRKKRT (213 aa)) are transcriptional activation. The interaction with non-structural protein 4A stretch occupies residues 2135–2139 (PPCKP). Positions 2187–2207 (GRRLARGSPPSEASSSASQLS) are disordered. Residues 2189-2441 (RLARGSPPSE…TPCAAEEQKL (253 aa)) form an interaction with host SKP2 region. Residue S2194 is modified to Phosphoserine; by host; in p56. S2197, S2201, S2204, S2207, and S2210 each carry phosphoserine; by host; in p58. The interval 2210 to 2249 (SLKATCTINHDSPDAELIEANLLWRQEMGGNITRVESENK) is ISDR. The tract at residues 2210 to 2275 (SLKATCTINH…REISVPAEIL (66 aa)) is interaction with EIF2AK2/PKR. Residues 2249-2306 (KVVILDSFDPLVAEEDEREISVPAEILRKSRRFTQALPIWARPDYNPPLIETWKKPNY) form an NS4B-binding region. The interval 2312–2334 (HGCPLPPPQSPPVPPPRKKRTVV) is disordered. A compositionally biased stretch (pro residues) spans 2315–2326 (PLPPPQSPPVPP). Residues 2322 to 2325 (PPVP) carry the SH3-binding motif. A Nuclear localization signal motif is present at residues 2326-2334 (PPRKKRTVV). K2350 is covalently cross-linked (Glycyl lysine isopeptide (Lys-Gly) (interchain with G-Cter in ubiquitin)). Low complexity predominate over residues 2351–2369 (SFGSSSTSGITGDNTTTSS). Residues 2351-2408 (SFGSSSTSGITGDNTTTSSEPAPSGCSPDSDAESYSSMPPLEGEPGDPDLSDGSWSTV) form a disordered region. The V3 stretch occupies residues 2354 to 2377 (SSSTSGITGDNTTTSSEPAPSGCS). Residues S2449 and S2462 each carry the phosphoserine; by host modification. The RdRp catalytic domain occupies 2634 to 2752 (PMGFSYDTRC…ICESAGVQED (119 aa)). Mg(2+) is bound by residues D2640, D2738, and D2739. Residues 2991–3011 (WFWFCLLLLAAGVGIYLLPNR) traverse the membrane as a helical segment.

This sequence belongs to the hepacivirus polyprotein family. Homooligomer. Interacts with E1 (via C-terminus). Interacts with the non-structural protein 5A. Interacts (via N-terminus) with host STAT1 (via SH2 domain); this interaction results in decreased STAT1 phosphorylation and ubiquitin-mediated proteasome-dependent STAT1 degradation, leading to decreased IFN-stimulated gene transcription. Interacts with host STAT3; this interaction constitutively activates STAT3. Interacts with host LTBR receptor. Interacts with host TNFRSF1A receptor and possibly induces apoptosis. Interacts with host HNRPK. Interacts with host YWHAE. Interacts with host UBE3A/E6AP. Interacts with host DDX3X. Interacts with host APOA2. Interacts with host RXRA protein. Interacts with host SP110 isoform 3/Sp110b; this interaction sequesters the transcriptional corepressor SP110 away from the nucleus. Interacts with host CREB3 nuclear transcription protein; this interaction triggers cell transformation. Interacts with host ACY3. Interacts with host C1QR1. Interacts with host RBM24; this interaction, which enhances the interaction of the mature core protein with 5'-UTR, may inhibit viral translation and favor replication. Interacts with host EIF2AK2/PKR; this interaction induces the autophosphorylation of EIF2AK2. Part of the viral assembly initiation complex composed of NS2, E1, E2, NS3, NS4A, NS5A and the mature core protein. In terms of assembly, forms a heterodimer with envelope glycoprotein E2. Interacts with mature core protein. Interacts with protease NS2. The heterodimer E1/E2 interacts with host CLDN1; this interaction plays a role in viral entry into host cell. Interacts with host SPSB2 (via C-terminus). Part of the viral assembly initiation complex composed of NS2, E1, E2, NS3, NS4A, NS5A and the mature core protein. Interacts with host NEURL3; this interaction prevents E1 binding to glycoprotein E2. As to quaternary structure, forms a heterodimer with envelope glycoprotein E1. Interacts with host CD81 and SCARB1 receptors; these interactions play a role in viral entry into host cell. Interacts with host EIF2AK2/PKR; this interaction inhibits EIF2AK2 and probably allows the virus to evade the innate immune response. Interacts with host CD209/DC-SIGN and CLEC4M/DC-SIGNR. Interact with host SPCS1; this interaction is essential for viral particle assembly. Interacts with protease NS2. The heterodimer E1/E2 interacts with host CLDN1; this interaction plays a role in viral entry into host cell. Part of the viral assembly initiation complex composed of NS2, E1, E2, NS3, NS4A, NS5A and the mature core protein. Interacts with host SLC3A2/4F2hc; the interaction may facilitate viral entry into host cell. Interacts with human PLSCR1. Homohexamer. Homoheptamer. Interacts with protease NS2. In terms of assembly, homodimer. Interacts with host SPCS1; this interaction is essential for viral particle assembly. Interacts with envelope glycoprotein E1. Interacts with envelope glycoprotein E2. Interacts with viroporin p7. Interacts with serine protease/helicase NS3. Part of the replication complex composed of NS2, NS3, NS4A, NS4B, NS5A and the RNA-directed RNA polymerase embedded in an ER-derived membranous web. Part of the viral assembly initiation complex composed of NS2, E1, E2, NS3, NS4A, NS5A and the mature core protein. As to quaternary structure, interacts with protease NS2. Interacts with non-structural protein 4A; this interaction stabilizes the folding of NS3 serine protease. NS3-NS4A interaction is essential for NS3 activation and allows membrane anchorage of the latter. NS3/NS4A complex also prevents phosphorylation of host IRF3, thus preventing the establishment of dsRNA induced antiviral state. Interacts with host MAVS; this interaction leads to the cleavage and inhibition of host MAVS. Interacts with host TICAM1; this interaction leads to the cleavage and inhibition of host TICAM1. Interacts with host TANK-binding kinase/TBK1; this interaction results in the inhibition of the association between TBK1 and IRF3, which leads to the inhibition of IRF3 activation. Interacts with host RBM24. Part of the replication complex composed of NS2, NS3, NS4A, NS4B, NS5A and the RNA-directed RNA polymerase embedded in an ER-derived membranous web. Part of the viral assembly initiation complex composed of NS2, E1, E2, NS3, NS4A, NS5A and the mature core protein. Interacts with NS3 serine protease; this interaction stabilizes the folding of NS3 serine protease. NS3-NS4A interaction is essential for NS3 activation and allows membrane anchorage of the latter. Interacts with non-structural protein 5A (via N-terminus). Part of the replication complex composed of NS2, NS3, NS4A, NS4B, NS5A and the RNA-directed RNA polymerase embedded in an ER-derived membranous web. Part of the viral assembly initiation complex composed of NS2, E1, E2, NS3, NS4A, NS5A and the mature core protein. In terms of assembly, homomultimer. Interacts with non-structural protein NS5A. Interacts with host PLA2G4C; this interaction likely initiates the recruitment of replication complexes to lipid droplets. Interacts with host STING; this interaction disrupts the interaction between STING and TBK1 thereby suppressing the interferon signaling. Part of the replication complex composed of NS2, NS3, NS4A, NS4B, NS5A and the RNA-directed RNA polymerase embedded in an ER-derived membranous web. As to quaternary structure, monomer. Homodimer; dimerization is required for RNA-binding. Interacts with the mature core protein. Interacts (via N-terminus) with non-structural protein 4A. Interacts with non-structural protein 4B. Interacts (via region D2) with RNA-directed RNA polymerase. Part of the viral assembly initiation complex composed of NS2, E1, E2, NS3, NS4A, NS5A and the mature core protein. Part of the replication complex composed of NS2, NS3, NS4A, NS4B, NS5A and the RNA-directed RNA polymerase embedded in an ER-derived membranous web. Interacts with host GRB2. Interacts with host BIN1. Interacts with host PIK3R1. Interacts with host SRCAP. Interacts with host FKBP8. Interacts (via C-terminus) with host VAPB (via MSP domain). Interacts with host EIF2AK2/PKR; this interaction leads to disruption of EIF2AK2 dimerization by NS5A and probably allows the virus to evade the innate immune response. Interacts (via N-terminus) with host PACSIN2 (via N-terminus); this interaction attenuates protein kinase C alpha-mediated phosphorylation of PACSIN2 by disrupting the interaction between PACSIN2 and PRKCA. Interacts (via N-terminus) with host SRC kinase (via SH2 domain). Interacts with most Src-family kinases. Interacts with host IFI27 and SKP2; promotes the ubiquitin-mediated proteasomal degradation of NS5A. Interacts with host GPS2. Interacts with host TNFRSF21; this interaction allows the modulation by the virus of JNK, p38 MAPK, STAT3, and Akt signaling pathways in a DR6-dependent manner. Interacts (via N-terminus) with host CIDEB (via N-terminus); this interaction seems to regulate the association of HCV particles with APOE. Interacts with host CHKA/Choline Kinase-alpha; CHKA bridges host PI4KA and NS5A and potentiates NS5A-stimulated PI4KA activity, which then facilitates the targeting of the ternary complex to the ER for viral replication. Interacts with host SPSB2 (via C-terminus); this interaction targets NS5A for ubiquitination and degradation. Interacts with host RAB18; this interaction may promote the association of NS5A and other replicase components with lipid droplets. Interacts (via region D2) with host PPIA/CYPA; the interaction stimulates RNA-binding ability of NS5A and is dependent on the peptidyl-prolyl cis-trans isomerase activity of PPIA/CYPA. Interacts with host TRIM14; this interaction induces the degradation of NS5A. Homooligomer. Interacts with non-structural protein 5A. Interacts with host VAPB. Interacts with host PRK2/PKN2. Interacts with host HNRNPA1 and SEPT6; these interactions facilitate viral replication. Part of the replication complex composed of NS2, NS3, NS4A, NS4B, NS5A and the RNA-directed RNA polymerase. It depends on Zn(2+) as a cofactor. Mg(2+) is required as a cofactor. Post-translationally, specific enzymatic cleavages in vivo yield mature proteins. The structural proteins, core, E1, E2 and p7 are produced by proteolytic processing by host signal peptidases. The core protein precursor is synthesized as a 23 kDa, which is retained in the ER membrane through the hydrophobic signal peptide. Cleavage by the signal peptidase releases the 21 kDa mature core protein. The cleavage of the core protein precursor occurs between aminoacids 176 and 188 but the exact cleavage site is not known. Some degraded forms of the core protein appear as well during the course of infection. The other proteins (p7, NS2, NS3, NS4A, NS4B, NS5A and NS5B) are cleaved by the viral proteases. Autoprocessing between NS2 and NS3 is mediated by the NS2 cysteine protease catalytic domain and regulated by the NS3 N-terminal domain. In terms of processing, phosphorylated by host PKC and PKA. Ubiquitinated; mediated by UBE3A and leading to core protein subsequent proteasomal degradation. Post-translationally, highly N-glycosylated. In terms of processing, palmitoylation is required for NS2/3 autoprocessing and E2 recruitment to membranes. Palmitoylated. This modification may play a role in its polymerization or in protein-protein interactions. Post-translationally, phosphorylated on serines in a basal form termed p56. p58 is a hyperphosphorylated form of p56. p56 and p58 coexist in the cell in roughly equivalent amounts. Hyperphosphorylation is dependent on the presence of NS4A. Host CSNK1A1/CKI-alpha or RPS6KB1 kinases may be responsible for NS5A phosphorylation. In terms of processing, tyrosine phosphorylation is essential for the interaction with host SRC. The N-terminus is phosphorylated by host PRK2/PKN2.

The protein resides in the host endoplasmic reticulum membrane. The protein localises to the host mitochondrion membrane. It localises to the virion. It is found in the host cytoplasm. Its subcellular location is the host nucleus. The protein resides in the host lipid droplet. The protein localises to the virion membrane. It localises to the host mitochondrion. It is found in the host cell membrane. Its subcellular location is the host perinuclear region. The catalysed reaction is Hydrolysis of four peptide bonds in the viral precursor polyprotein, commonly with Asp or Glu in the P6 position, Cys or Thr in P1 and Ser or Ala in P1'.. It carries out the reaction a ribonucleoside 5'-triphosphate + H2O = a ribonucleoside 5'-diphosphate + phosphate + H(+). The enzyme catalyses ATP + H2O = ADP + phosphate + H(+). It catalyses the reaction RNA(n) + a ribonucleoside 5'-triphosphate = RNA(n+1) + diphosphate. Inhibited by the antiviral drug hexamethylene amiloride. Inhibition by amantadine appears to be genotype-dependent. Also inhibited by long-alkyl-chain iminosugar derivatives. Its activity is regulated as follows. Activity is up-regulated by PRK2/PKN2-mediated phosphorylation. Its function is as follows. Packages viral RNA to form a viral nucleocapsid, and promotes virion budding. Participates in the viral particle production as a result of its interaction with the non-structural protein 5A. Binds RNA and may function as a RNA chaperone to induce the RNA structural rearrangements taking place during virus replication. Modulates viral translation initiation by interacting with viral IRES and 40S ribosomal subunit. Affects various cell signaling pathways, host immunity and lipid metabolism. Prevents the establishment of cellular antiviral state by blocking the interferon-alpha/beta (IFN-alpha/beta) and IFN-gamma signaling pathways and by blocking the formation of phosphorylated STAT1 and promoting ubiquitin-mediated proteasome-dependent degradation of STAT1. Activates STAT3 leading to cellular transformation. Regulates the activity of cellular genes, including c-myc and c-fos. May repress the promoter of p53, and sequester CREB3 and SP110 isoform 3/Sp110b in the cytoplasm. Represses cell cycle negative regulating factor CDKN1A, thereby interrupting an important check point of normal cell cycle regulation. Targets transcription factors involved in the regulation of inflammatory responses and in the immune response: suppresses TNF-induced NF-kappa-B activation, and activates AP-1. Binds to dendritic cells (DCs) via C1QR1, resulting in down-regulation of T-lymphocytes proliferation. Alters lipid metabolism by interacting with hepatocellular proteins involved in lipid accumulation and storage. Induces up-regulation of FAS promoter activity, and thereby contributes to the increased triglyceride accumulation in hepatocytes (steatosis). Functionally, forms a heterodimer with envelope glycoprotein E2, which mediates virus attachment to the host cell, virion internalization through clathrin-dependent endocytosis and fusion with host membrane. Fusion with the host cell is most likely mediated by both E1 and E2, through conformational rearrangements of the heterodimer required for fusion rather than a classical class II fusion mechanism. E1/E2 heterodimer binds host apolipoproteins such as APOB and ApoE thereby forming a lipo-viro-particle (LVP). APOE associated to the LVP allows the initial virus attachment to cell surface receptors such as the heparan sulfate proteoglycans (HSPGs), syndecan-1 (SDC1), syndecan-1 (SDC2), the low-density lipoprotein receptor (LDLR) and scavenger receptor class B type I (SCARB1). The cholesterol transfer activity of SCARB1 allows E2 exposure and binding of E2 to SCARB1 and the tetraspanin CD81. E1/E2 heterodimer binding on CD81 activates the epithelial growth factor receptor (EGFR) signaling pathway. Diffusion of the complex E1-E2-EGFR-SCARB1-CD81 to the cell lateral membrane allows further interaction with Claudin 1 (CLDN1) and occludin (OCLN) to finally trigger HCV entry. In terms of biological role, forms a heterodimer with envelope glycoprotein E1, which mediates virus attachment to the host cell, virion internalization through clathrin-dependent endocytosis and fusion with host membrane. Fusion with the host cell is most likely mediated by both E1 and E2, through conformational rearrangements of the heterodimer required for fusion rather than a classical class II fusion mechanism. The interaction between envelope glycoprotein E2 and host apolipoprotein E/APOE allows the proper assembly, maturation and infectivity of the viral particles. This interaction is probably promoted via the up-regulation of cellular autophagy by the virus. E1/E2 heterodimer binds host apolipoproteins such as APOB and APOE thereby forming a lipo-viro-particle (LVP). APOE associated to the LVP allows the initial virus attachment to cell surface receptors such as the heparan sulfate proteoglycans (HSPGs), syndecan-1 (SDC1), syndecan-1 (SDC2), the low-density lipoprotein receptor (LDLR) and scavenger receptor class B type I (SCARB1). The cholesterol transfer activity of SCARB1 allows E2 exposure and binding of E2 to SCARB1 and the tetraspanin CD81. E1/E2 heterodimer binding on CD81 activates the epithelial growth factor receptor (EGFR) signaling pathway. Diffusion of the complex E1-E2-EGFR-SCARB1-CD81 to the cell lateral membrane allows further interaction with Claudin 1 (CLDN1) and occludin (OCLN) to finally trigger HCV entry. Inhibits host EIF2AK2/PKR activation, preventing the establishment of an antiviral state. Viral ligand for CD209/DC-SIGN and CLEC4M/DC-SIGNR, which are respectively found on dendritic cells (DCs), and on liver sinusoidal endothelial cells and macrophage-like cells of lymph node sinuses. These interactions allow the capture of circulating HCV particles by these cells and subsequent facilitated transmission to permissive cells such as hepatocytes and lymphocyte subpopulations. The interaction between E2 and host amino acid transporter complex formed by SLC3A2 and SLC7A5/LAT1 may facilitate viral entry into host cell. Ion channel protein that acts as a viroporin and plays an essential role in the assembly, envelopment and secretion of viral particles. Regulates the host cell secretory pathway, which induces the intracellular retention of viral glycoproteins and favors assembly of viral particles. Creates a pore in acidic organelles and releases Ca(2+) and H(+) in the cytoplasm of infected cells, leading to a productive viral infection. High levels of cytoplasmic Ca(2+) may trigger membrane trafficking and transport of viral ER-associated proteins to viroplasms, sites of viral genome replication. This ionic imbalance induces the assembly of the inflammasome complex, which triggers the maturation of pro-IL-1beta into IL-1beta through the action of caspase-1. Targets also host mitochondria and induces mitochondrial depolarization. In addition of its role as a viroporin, acts as a lipid raft adhesion factor. Its function is as follows. Cysteine protease required for the proteolytic auto-cleavage between the non-structural proteins NS2 and NS3. The N-terminus of NS3 is required for the function of NS2 protease (active region NS2-3). Promotes the initiation of viral particle assembly by mediating the interaction between structural and non-structural proteins. Functionally, displays three enzymatic activities: serine protease with a chymotrypsin-like fold, NTPase and RNA helicase. NS3 serine protease, in association with NS4A, is responsible for the cleavages of NS3-NS4A, NS4A-NS4B, NS4B-NS5A and NS5A-NS5B. The NS3/NS4A complex prevents phosphorylation of host IRF3, thus preventing the establishment of dsRNA induced antiviral state. The NS3/NS4A complex induces host amino acid transporter component SLC3A2, thus contributing to HCV propagation. NS3 RNA helicase binds to RNA and unwinds both dsDNA and dsRNA in the 3' to 5' direction, and likely resolves RNA complicated stable secondary structures in the template strand. Binds a single ATP and catalyzes the unzipping of a single base pair of dsRNA. Inhibits host antiviral proteins TBK1 and IRF3 thereby preventing the establishment of an antiviral state. Cleaves host MAVS/CARDIF thereby preventing the establishment of an antiviral state. Cleaves host TICAM1/TRIF, thereby disrupting TLR3 signaling and preventing the establishment of an antiviral state. In terms of biological role, induces a specific membrane alteration that serves as a scaffold for the virus replication complex. This membrane alteration gives rise to the so-called ER-derived membranous web that contains the replication complex. NS4B self-interaction contributes to its function in membranous web formation. Promotes host TRIF protein degradation in a CASP8-dependent manner thereby inhibiting host TLR3-mediated interferon signaling. Disrupts the interaction between STING and TBK1 contributing to the inhibition of interferon signaling. Phosphorylated protein that is indispensable for viral replication and assembly. Both hypo- and hyperphosphorylated states are required for the viral life cycle. The hyperphosphorylated form of NS5A is an inhibitor of viral replication. Involved in RNA-binding and especially in binding to the viral genome. Zinc is essential for RNA-binding. Participates in the viral particle production as a result of its interaction with the mature viral core protein. Its interaction with host VAPB may target the viral replication complex to vesicles. Down-regulates viral IRES translation initiation. Mediates interferon resistance, presumably by interacting with and inhibiting host EIF2AK2/PKR. Prevents BIN1-induced apoptosis. Acts as a transcriptional activator of some host genes important for viral replication when localized in the nucleus. Via the interaction with host PACSIN2, modulates lipid droplet formation in order to promote virion assembly. Modulates TNFRSF21/DR6 signaling pathway for viral propagation. Its function is as follows. RNA-dependent RNA polymerase that performs primer-template recognition and RNA synthesis during viral replication. Initiates RNA transcription/replication at a flavin adenine dinucleotide (FAD), resulting in a 5'- FAD cap on viral RNAs. In this way, recognition of viral 5' RNA by host pattern recognition receptors can be bypassed, thereby evading activation of antiviral pathways. In Hepatitis C virus genotype 1b (isolate HC-J1) (HCV), this protein is Genome polyprotein.